Consider the following 388-residue polypeptide: Queuine tRNA-ribosyltransferase (388 aa).

Asp-90 functions as the Proton acceptor in the catalytic mechanism. Residues 90–94, Asp-144, Gln-205, and Gly-232 contribute to the substrate site; that span reads DSGGF. The segment at 263-269 is RNA binding; the sequence is GVGTPED. Asp-282 acts as the Nucleophile in catalysis. The segment at 287-291 is RNA binding; important for wobble base 34 recognition; that stretch reads TRNAR. Residues Cys-320, Cys-322, Cys-325, and His-351 each contribute to the Zn(2+) site.

This sequence belongs to the queuine tRNA-ribosyltransferase family. Homodimer. Within each dimer, one monomer is responsible for RNA recognition and catalysis, while the other monomer binds to the replacement base PreQ1. Zn(2+) serves as cofactor.

The catalysed reaction is 7-aminomethyl-7-carbaguanine + guanosine(34) in tRNA = 7-aminomethyl-7-carbaguanosine(34) in tRNA + guanine. It functions in the pathway tRNA modification; tRNA-queuosine biosynthesis. Functionally, catalyzes the base-exchange of a guanine (G) residue with the queuine precursor 7-aminomethyl-7-deazaguanine (PreQ1) at position 34 (anticodon wobble position) in tRNAs with GU(N) anticodons (tRNA-Asp, -Asn, -His and -Tyr). Catalysis occurs through a double-displacement mechanism. The nucleophile active site attacks the C1' of nucleotide 34 to detach the guanine base from the RNA, forming a covalent enzyme-RNA intermediate. The proton acceptor active site deprotonates the incoming PreQ1, allowing a nucleophilic attack on the C1' of the ribose to form the product. After dissociation, two additional enzymatic reactions on the tRNA convert PreQ1 to queuine (Q), resulting in the hypermodified nucleoside queuosine (7-(((4,5-cis-dihydroxy-2-cyclopenten-1-yl)amino)methyl)-7-deazaguanosine). The chain is Queuine tRNA-ribosyltransferase from Campylobacter curvus (strain 525.92).